Reading from the N-terminus, the 98-residue chain is NADH-ubiquinone oxidoreductase chain 4L (98 aa).

3 helical membrane-spanning segments follow: residues 2-22, 29-49, and 61-81; these read PPIF…TLIF, SLLC…LIIL, and ILLL…LVMV.

This sequence belongs to the complex I subunit 4L family. Core subunit of respiratory chain NADH dehydrogenase (Complex I) which is composed of 45 different subunits.

Its subcellular location is the mitochondrion inner membrane. It catalyses the reaction a ubiquinone + NADH + 5 H(+)(in) = a ubiquinol + NAD(+) + 4 H(+)(out). Its function is as follows. Core subunit of the mitochondrial membrane respiratory chain NADH dehydrogenase (Complex I) which catalyzes electron transfer from NADH through the respiratory chain, using ubiquinone as an electron acceptor. Part of the enzyme membrane arm which is embedded in the lipid bilayer and involved in proton translocation. The chain is NADH-ubiquinone oxidoreductase chain 4L (MT-ND4L) from Avahi unicolor (Sambirano woolly lemur).